Reading from the N-terminus, the 49-residue chain is uncharacterized protein (49 aa).

This is an uncharacterized protein from Saccharomyces cerevisiae (strain ATCC 204508 / S288c) (Baker's yeast).